A 465-amino-acid polypeptide reads, in one-letter code: MIKREFLPESAELKIKLTADSKKWAEFYQKAEQKQAAKVSLRGFRKGKVPLEKARAYLNPQAVFELALRMFLPELEKQAATNIIDSDNVIESPIFNIVNMDKNNLEIEFLYPVYPEIKLPDYKNLKTKFAIKKITKEDIELQKQKLLEAKGRFIEVNRPVKIGDVINFNFKGFIDDEPFDGGEGENFDLRIGSNSFIAGFEEQLVGLEIKKEADIYVTFPENYQVHTYANKKARFRVKINKIKENQPAKLTNEFVASLKIQNVETISQLEVYLENLTERENIERAKIDFQKNALTEIGEQVEVPLAKKLINLEIERLNEVFHSTLKQQEIPLKEYLKITKFTEKDIYDQFEVEAKKLLKNSFIFAEIAKLEGLVPTQQEYESHVEKLAKFTGKSVQEISETVSYNEIQINITNQKVIDKLIEFNHETKDEEIVNKNQNDNEIEQDKEQKDNNEEKIKQENNLENK.

Residues 163–248 form the PPIase FKBP-type domain; it reads GDVINFNFKG…INKIKENQPA (86 aa). The disordered stretch occupies residues 431–465; it reads EIVNKNQNDNEIEQDKEQKDNNEEKIKQENNLENK. A compositionally biased stretch (basic and acidic residues) spans 443–465; that stretch reads EQDKEQKDNNEEKIKQENNLENK.

It belongs to the FKBP-type PPIase family. Tig subfamily.

The protein resides in the cytoplasm. It carries out the reaction [protein]-peptidylproline (omega=180) = [protein]-peptidylproline (omega=0). Involved in protein export. Acts as a chaperone by maintaining the newly synthesized protein in an open conformation. Functions as a peptidyl-prolyl cis-trans isomerase. The polypeptide is Trigger factor (Mesomycoplasma hyopneumoniae (strain 232) (Mycoplasma hyopneumoniae)).